Reading from the N-terminus, the 493-residue chain is Cytochrome P450 2E1 (493 aa).

Phe-298–Thr-303 contacts substrate. Cys-437 is a heme binding site.

This sequence belongs to the cytochrome P450 family. In terms of assembly, interacts with chaperones HSP70 and HSP90; this interaction is required for initial targeting to mitochondria. Heme is required as a cofactor.

The protein localises to the endoplasmic reticulum membrane. Its subcellular location is the microsome membrane. The protein resides in the mitochondrion inner membrane. It catalyses the reaction an organic molecule + reduced [NADPH--hemoprotein reductase] + O2 = an alcohol + oxidized [NADPH--hemoprotein reductase] + H2O + H(+). It carries out the reaction (5Z,8Z,11Z)-eicosatrienoate + reduced [NADPH--hemoprotein reductase] + O2 = 19-hydroxy-(5Z,8Z,11Z)-eicosatrienoate + oxidized [NADPH--hemoprotein reductase] + H2O + H(+). The enzyme catalyses (5Z,8Z,11Z,14Z,17Z)-eicosapentaenoate + reduced [NADPH--hemoprotein reductase] + O2 = 19-hydroxy-(5Z,8Z,11Z,14Z,17Z)-eicosapentaenoate + oxidized [NADPH--hemoprotein reductase] + H2O + H(+). The catalysed reaction is (4Z,7Z,10Z,13Z,16Z,19Z)-docosahexaenoate + reduced [NADPH--hemoprotein reductase] + O2 = 21-hydroxy-(4Z,7Z,10Z,13Z,16Z,19Z)-docosahexaenoate + oxidized [NADPH--hemoprotein reductase] + H2O + H(+). It catalyses the reaction dodecanoate + reduced [NADPH--hemoprotein reductase] + O2 = 11-hydroxydodecanoate + oxidized [NADPH--hemoprotein reductase] + H2O + H(+). It carries out the reaction tetradecanoate + reduced [NADPH--hemoprotein reductase] + O2 = 13-hydroxytetradecanoate + oxidized [NADPH--hemoprotein reductase] + H2O + H(+). The enzyme catalyses 4-nitrophenol + NADPH + O2 + H(+) = 4-nitrocatechol + NADP(+) + H2O. It functions in the pathway lipid metabolism; fatty acid metabolism. Its activity is regulated as follows. The omega-1 hydroxylase activity is stimulated by cytochrome b5. Functionally, a cytochrome P450 monooxygenase involved in the metabolism of fatty acids. Mechanistically, uses molecular oxygen inserting one oxygen atom into a substrate, and reducing the second into a water molecule, with two electrons provided by NADPH via cytochrome P450 reductase (NADPH--hemoprotein reductase). Catalyzes the hydroxylation of carbon-hydrogen bonds. Hydroxylates fatty acids specifically at the omega-1 position displaying the highest catalytic activity for saturated fatty acids. May be involved in the oxidative metabolism of xenobiotics. This is Cytochrome P450 2E1 from Rattus norvegicus (Rat).